A 502-amino-acid polypeptide reads, in one-letter code: Lysine--tRNA ligase (502 aa).

Glu413 and Glu420 together coordinate Mg(2+).

It belongs to the class-II aminoacyl-tRNA synthetase family. Homodimer. Mg(2+) is required as a cofactor.

It is found in the cytoplasm. The catalysed reaction is tRNA(Lys) + L-lysine + ATP = L-lysyl-tRNA(Lys) + AMP + diphosphate. In Haemophilus influenzae (strain PittEE), this protein is Lysine--tRNA ligase.